Reading from the N-terminus, the 459-residue chain is Ribulose bisphosphate carboxylase large chain (459 aa).

Lys-4 is modified (N6,N6,N6-trimethyllysine). 2 residues coordinate substrate: Asn-113 and Thr-163. Catalysis depends on Lys-165, which acts as the Proton acceptor. Lys-167 is a substrate binding site. 3 residues coordinate Mg(2+): Lys-191, Asp-193, and Glu-194. Residue Lys-191 is modified to N6-carboxylysine. His-284 acts as the Proton acceptor in catalysis. Residues Arg-285, His-317, and Ser-369 each coordinate substrate.

The protein belongs to the RuBisCO large chain family. Type I subfamily. Heterohexadecamer of 8 large chains and 8 small chains; disulfide-linked. The disulfide link is formed within the large subunit homodimers. Mg(2+) serves as cofactor. In terms of processing, the disulfide bond which can form in the large chain dimeric partners within the hexadecamer appears to be associated with oxidative stress and protein turnover.

The protein resides in the plastid. It is found in the chloroplast. The catalysed reaction is 2 (2R)-3-phosphoglycerate + 2 H(+) = D-ribulose 1,5-bisphosphate + CO2 + H2O. It carries out the reaction D-ribulose 1,5-bisphosphate + O2 = 2-phosphoglycolate + (2R)-3-phosphoglycerate + 2 H(+). RuBisCO catalyzes two reactions: the carboxylation of D-ribulose 1,5-bisphosphate, the primary event in carbon dioxide fixation, as well as the oxidative fragmentation of the pentose substrate in the photorespiration process. Both reactions occur simultaneously and in competition at the same active site. This is Ribulose bisphosphate carboxylase large chain from Garrya elliptica (Wavyleaf silktassel).